Here is a 273-residue protein sequence, read N- to C-terminus: 3-methyl-2-oxobutanoate hydroxymethyltransferase 1 (273 aa).

Residues aspartate 49 and aspartate 88 each coordinate Mg(2+). Residues 49–50 (DS), aspartate 88, and lysine 118 each bind 3-methyl-2-oxobutanoate. A Mg(2+)-binding site is contributed by glutamate 120. The active-site Proton acceptor is glutamate 187.

The protein belongs to the PanB family. As to quaternary structure, homodecamer; pentamer of dimers. It depends on Mg(2+) as a cofactor.

The protein localises to the cytoplasm. It carries out the reaction 3-methyl-2-oxobutanoate + (6R)-5,10-methylene-5,6,7,8-tetrahydrofolate + H2O = 2-dehydropantoate + (6S)-5,6,7,8-tetrahydrofolate. The protein operates within cofactor biosynthesis; (R)-pantothenate biosynthesis; (R)-pantoate from 3-methyl-2-oxobutanoate: step 1/2. Functionally, catalyzes the reversible reaction in which hydroxymethyl group from 5,10-methylenetetrahydrofolate is transferred onto alpha-ketoisovalerate to form ketopantoate. The protein is 3-methyl-2-oxobutanoate hydroxymethyltransferase 1 of Pseudomonas aeruginosa (strain UCBPP-PA14).